The following is a 272-amino-acid chain: Undecaprenyl-diphosphatase (272 aa).

7 helical membrane-spanning segments follow: residues Ser-39–Phe-59, Trp-87–Ile-107, Ser-113–Asp-133, Ile-145–Val-165, Phe-188–Leu-208, Pro-220–Leu-240, and Phe-251–Leu-271.

Belongs to the UppP family.

It localises to the cell inner membrane. The enzyme catalyses di-trans,octa-cis-undecaprenyl diphosphate + H2O = di-trans,octa-cis-undecaprenyl phosphate + phosphate + H(+). Functionally, catalyzes the dephosphorylation of undecaprenyl diphosphate (UPP). Confers resistance to bacitracin. The sequence is that of Undecaprenyl-diphosphatase from Trichlorobacter lovleyi (strain ATCC BAA-1151 / DSM 17278 / SZ) (Geobacter lovleyi).